A 158-amino-acid chain; its full sequence is 2-C-methyl-D-erythritol 2,4-cyclodiphosphate synthase (158 aa).

A divalent metal cation is bound by residues Asp9 and His11. 4-CDP-2-C-methyl-D-erythritol 2-phosphate contacts are provided by residues 9 to 11 (DVH) and 35 to 36 (HS). His43 is a binding site for a divalent metal cation. 4-CDP-2-C-methyl-D-erythritol 2-phosphate contacts are provided by residues 57–59 (DIG), 62–66 (FPDTD), 101–107 (AQAPKMA), 133–136 (TTTE), Phe140, and Arg143.

Belongs to the IspF family. Homotrimer. A divalent metal cation serves as cofactor.

It carries out the reaction 4-CDP-2-C-methyl-D-erythritol 2-phosphate = 2-C-methyl-D-erythritol 2,4-cyclic diphosphate + CMP. It functions in the pathway isoprenoid biosynthesis; isopentenyl diphosphate biosynthesis via DXP pathway; isopentenyl diphosphate from 1-deoxy-D-xylulose 5-phosphate: step 4/6. Its function is as follows. Involved in the biosynthesis of isopentenyl diphosphate (IPP) and dimethylallyl diphosphate (DMAPP), two major building blocks of isoprenoid compounds. Catalyzes the conversion of 4-diphosphocytidyl-2-C-methyl-D-erythritol 2-phosphate (CDP-ME2P) to 2-C-methyl-D-erythritol 2,4-cyclodiphosphate (ME-CPP) with a corresponding release of cytidine 5-monophosphate (CMP). The protein is 2-C-methyl-D-erythritol 2,4-cyclodiphosphate synthase of Vibrio cholerae serotype O1 (strain ATCC 39541 / Classical Ogawa 395 / O395).